The following is a 533-amino-acid chain: 2-succinyl-5-enolpyruvyl-6-hydroxy-3-cyclohexene-1-carboxylate synthase (533 aa).

The protein belongs to the TPP enzyme family. MenD subfamily. As to quaternary structure, homodimer. It depends on Mg(2+) as a cofactor. Mn(2+) serves as cofactor. Thiamine diphosphate is required as a cofactor.

The catalysed reaction is isochorismate + 2-oxoglutarate + H(+) = 5-enolpyruvoyl-6-hydroxy-2-succinyl-cyclohex-3-ene-1-carboxylate + CO2. Its pathway is quinol/quinone metabolism; 1,4-dihydroxy-2-naphthoate biosynthesis; 1,4-dihydroxy-2-naphthoate from chorismate: step 2/7. The protein operates within quinol/quinone metabolism; menaquinone biosynthesis. Functionally, catalyzes the thiamine diphosphate-dependent decarboxylation of 2-oxoglutarate and the subsequent addition of the resulting succinic semialdehyde-thiamine pyrophosphate anion to isochorismate to yield 2-succinyl-5-enolpyruvyl-6-hydroxy-3-cyclohexene-1-carboxylate (SEPHCHC). This Akkermansia muciniphila (strain ATCC BAA-835 / DSM 22959 / JCM 33894 / BCRC 81048 / CCUG 64013 / CIP 107961 / Muc) protein is 2-succinyl-5-enolpyruvyl-6-hydroxy-3-cyclohexene-1-carboxylate synthase.